Reading from the N-terminus, the 295-residue chain is Small ribosomal subunit protein uS2 (295 aa).

Serine 2 carries the post-translational modification N-acetylserine. Serine 43 carries the phosphoserine modification. The residue at position 52 (lysine 52) is an N6-acetyllysine. The tract at residues 54-113 (TWEKLLLAARAIVAIENPADVSVISSRNTGQRAVLKFAAATGATPIAGRFTPGTFTNQIQ) is interaction with PPP1R16B. Lysine 89 carries the post-translational modification N6-acetyllysine; alternate. Lysine 89 is covalently cross-linked (Glycyl lysine isopeptide (Lys-Gly) (interchain with G-Cter in SUMO2); alternate). Threonine 97 bears the Phosphothreonine mark. 2 laminin-binding regions span residues 161 to 180 (IPCN…MLAR) and 205 to 229 (RDPE…EFQG). [DE]-W-[ST] repeat units follow at residues 230–232 (EWT), 247–249 (DWS), 266–268 (DWS), 275–277 (DWS), and 293–295 (EWS). Residues 242 to 295 (QPEVADWSEGVQVPSVPIQQFPTEDWSAQPATEDWSAAPTAQATEWVGATTEWS) form a laminin-binding region. A disordered region spans residues 266-295 (DWSAQPATEDWSAAPTAQATEWVGATTEWS).

This sequence belongs to the universal ribosomal protein uS2 family. As to quaternary structure, monomer (37LRP) and homodimer (67LR). Component of the small ribosomal subunit. Mature ribosomes consist of a small (40S) and a large (60S) subunit. The 40S subunit contains about 33 different proteins and 1 molecule of RNA (18S). The 60S subunit contains about 49 different proteins and 3 molecules of RNA (28S, 5.8S and 5S). Interacts with RPS21. Interacts with several laminins including at least LAMB1. Interacts with MDK. Interacts with PRNP. The mature dimeric form interacts with PPP1R16B (via its fourth ankyrin repeat). Interacts with PPP1CA only in the presence of PPP1R16B. Acylated. Acylation may be a prerequisite for conversion of the monomeric 37 kDa laminin receptor precursor (37LRP) to the mature dimeric 67 kDa laminin receptor (67LR), and may provide a mechanism for membrane association. In terms of processing, cleaved by stromelysin-3 (ST3) at the cell surface. Cleavage by stromelysin-3 may be a mechanism to alter cell-extracellular matrix interactions.

It is found in the cell membrane. The protein resides in the cytoplasm. Its subcellular location is the nucleus. Required for the assembly and/or stability of the 40S ribosomal subunit. Required for the processing of the 20S rRNA-precursor to mature 18S rRNA in a late step of the maturation of 40S ribosomal subunits. Also functions as a cell surface receptor for laminin. Plays a role in cell adhesion to the basement membrane and in the consequent activation of signaling transduction pathways. May play a role in cell fate determination and tissue morphogenesis. Also acts as a receptor for several other ligands, including the pathogenic prion protein, viruses, and bacteria. Acts as a PPP1R16B-dependent substrate of PPP1CA. Enables malignant tumor cells to penetrate laminin tissue and vessel barriers. Activates precursor thymic anti-OFA/iLRP specific cytotoxic T-cell. May induce CD8 T-suppressor cells secreting IL-10. This is Small ribosomal subunit protein uS2 (Rpsa) from Mus musculus (Mouse).